A 485-amino-acid chain; its full sequence is 28S rRNA (uridine-N(3))-methyltransferase (485 aa).

Positions 296, 318, and 347 each coordinate S-adenosyl-L-methionine.

The protein belongs to the class IV-like SAM-binding methyltransferase superfamily.

The protein localises to the nucleus. The enzyme catalyses uridine in 28S rRNA + S-adenosyl-L-methionine = N(3)-methyluridine in 28S rRNA + S-adenosyl-L-homocysteine + H(+). Its function is as follows. S-adenosyl-L-methionine-dependent methyltransferase that specifically methylates the uridine in position 3485 of 28S rRNA. This chain is 28S rRNA (uridine-N(3))-methyltransferase, found in Drosophila melanogaster (Fruit fly).